The sequence spans 514 residues: 2,3-bisphosphoglycerate-independent phosphoglycerate mutase (514 aa).

Mn(2+) contacts are provided by aspartate 13 and serine 63. Serine 63 acts as the Phosphoserine intermediate in catalysis. Residues histidine 124, 154 to 155 (RD), arginine 186, arginine 192, 258 to 261 (RADR), and lysine 332 each bind substrate. Mn(2+) is bound by residues aspartate 399, histidine 403, aspartate 440, histidine 441, and histidine 459.

It belongs to the BPG-independent phosphoglycerate mutase family. As to quaternary structure, monomer. Requires Mn(2+) as cofactor.

It catalyses the reaction (2R)-2-phosphoglycerate = (2R)-3-phosphoglycerate. It functions in the pathway carbohydrate degradation; glycolysis; pyruvate from D-glyceraldehyde 3-phosphate: step 3/5. In terms of biological role, catalyzes the interconversion of 2-phosphoglycerate and 3-phosphoglycerate. This is 2,3-bisphosphoglycerate-independent phosphoglycerate mutase from Legionella pneumophila (strain Paris).